Consider the following 574-residue polypeptide: Proline--tRNA ligase (574 aa).

Belongs to the class-II aminoacyl-tRNA synthetase family. ProS type 1 subfamily. Homodimer.

It localises to the cytoplasm. It carries out the reaction tRNA(Pro) + L-proline + ATP = L-prolyl-tRNA(Pro) + AMP + diphosphate. Catalyzes the attachment of proline to tRNA(Pro) in a two-step reaction: proline is first activated by ATP to form Pro-AMP and then transferred to the acceptor end of tRNA(Pro). As ProRS can inadvertently accommodate and process non-cognate amino acids such as alanine and cysteine, to avoid such errors it has two additional distinct editing activities against alanine. One activity is designated as 'pretransfer' editing and involves the tRNA(Pro)-independent hydrolysis of activated Ala-AMP. The other activity is designated 'posttransfer' editing and involves deacylation of mischarged Ala-tRNA(Pro). The misacylated Cys-tRNA(Pro) is not edited by ProRS. The protein is Proline--tRNA ligase of Nitratidesulfovibrio vulgaris (strain ATCC 29579 / DSM 644 / CCUG 34227 / NCIMB 8303 / VKM B-1760 / Hildenborough) (Desulfovibrio vulgaris).